The chain runs to 136 residues: Large ribosomal subunit protein eL27B (136 aa).

This sequence belongs to the eukaryotic ribosomal protein eL27 family. As to quaternary structure, component of the large ribosomal subunit (LSU). Mature yeast ribosomes consist of a small (40S) and a large (60S) subunit. The 40S small subunit contains 1 molecule of ribosomal RNA (18S rRNA) and 33 different proteins (encoded by 57 genes). The large 60S subunit contains 3 rRNA molecules (25S, 5.8S and 5S rRNA) and 46 different proteins (encoded by 81 genes).

The protein localises to the cytoplasm. In terms of biological role, component of the ribosome, a large ribonucleoprotein complex responsible for the synthesis of proteins in the cell. The small ribosomal subunit (SSU) binds messenger RNAs (mRNAs) and translates the encoded message by selecting cognate aminoacyl-transfer RNA (tRNA) molecules. The large subunit (LSU) contains the ribosomal catalytic site termed the peptidyl transferase center (PTC), which catalyzes the formation of peptide bonds, thereby polymerizing the amino acids delivered by tRNAs into a polypeptide chain. The nascent polypeptides leave the ribosome through a tunnel in the LSU and interact with protein factors that function in enzymatic processing, targeting, and the membrane insertion of nascent chains at the exit of the ribosomal tunnel. The protein is Large ribosomal subunit protein eL27B of Saccharomyces cerevisiae (strain ATCC 204508 / S288c) (Baker's yeast).